The primary structure comprises 400 residues: Queuine tRNA-ribosyltransferase catalytic subunit 1 (400 aa).

Asp103 (proton acceptor) is an active-site residue. Queuine is bound by residues 103-107 (DSGGF), Asp157, Gln200, and Gly227. Residues 258–264 (GVGYAVD) are RNA binding. Asp277 acts as the Nucleophile in catalysis. Positions 282-286 (TRTAR) are RNA binding; important for wobble base 34 recognition. Residues Cys315, Cys317, Cys320, and His345 each contribute to the Zn(2+) site.

It belongs to the queuine tRNA-ribosyltransferase family. As to quaternary structure, heterodimer of a catalytic subunit qtrt1 and an accessory subunit qtrt2. Requires Zn(2+) as cofactor.

Its subcellular location is the cytoplasm. It is found in the mitochondrion outer membrane. It carries out the reaction guanosine(34) in tRNA + queuine = queuosine(34) in tRNA + guanine. Catalytic subunit of the queuine tRNA-ribosyltransferase (TGT) that catalyzes the base-exchange of a guanine (G) residue with queuine (Q) at position 34 (anticodon wobble position) in tRNAs with GU(N) anticodons (tRNA-Asp, -Asn, -His and -Tyr), resulting in the hypermodified nucleoside queuosine (7-(((4,5-cis-dihydroxy-2-cyclopenten-1-yl)amino)methyl)-7-deazaguanosine). Catalysis occurs through a double-displacement mechanism. The nucleophile active site attacks the C1' of nucleotide 34 to detach the guanine base from the RNA, forming a covalent enzyme-RNA intermediate. The proton acceptor active site deprotonates the incoming queuine, allowing a nucleophilic attack on the C1' of the ribose to form the product. The protein is Queuine tRNA-ribosyltransferase catalytic subunit 1 of Danio rerio (Zebrafish).